Reading from the N-terminus, the 662-residue chain is Junctophilin-1 (662 aa).

The Cytoplasmic segment spans residues Met-1–Ser-640. 5 MORN repeats span residues Tyr-14–Gly-36, Tyr-38–Thr-59, Tyr-60–Tyr-82, Tyr-106–Thr-128, and Tyr-129–Met-151. Ser-157, Ser-216, and Ser-220 each carry phosphoserine. The tract at residues Ser-228 to Arg-247 is disordered. MORN repeat units follow at residues Tyr-281–Lys-303 and Tyr-304–Lys-326. Positions Val-432–Pro-443 are enriched in basic and acidic residues. The segment at Val-432–Ala-634 is disordered. Position 448 is a phosphothreonine (Thr-448). At Ser-452 the chain carries Phosphoserine. Thr-461 is modified (phosphothreonine). Residues Ser-465, Ser-469, and Ser-475 each carry the phosphoserine modification. Residues Lys-584–Pro-599 are compositionally biased toward low complexity. Basic and acidic residues predominate over residues Val-600–Glu-614. A helical; Anchor for type IV membrane protein transmembrane segment spans residues Val-641 to Leu-661.

The protein belongs to the junctophilin family.

The protein resides in the cell membrane. Its subcellular location is the endoplasmic reticulum membrane. The protein localises to the sarcoplasmic reticulum membrane. In terms of biological role, junctophilins contribute to the formation of junctional membrane complexes (JMCs) which link the plasma membrane with the endoplasmic or sarcoplasmic reticulum in excitable cells. Provides a structural foundation for functional cross-talk between the cell surface and intracellular calcium release channels. JPH1 contributes to the construction of the skeletal muscle triad by linking the t-tubule (transverse-tubule) and SR (sarcoplasmic reticulum) membranes. The protein is Junctophilin-1 (JPH1) of Oryctolagus cuniculus (Rabbit).